A 429-amino-acid polypeptide reads, in one-letter code: Hydrogenobyrinate a,c-diamide synthase (429 aa).

A GATase cobBQ-type domain is found at Arg-240–Glu-429. Cys-323 functions as the Nucleophile in the catalytic mechanism.

This sequence belongs to the CobB/CbiA family. Mg(2+) serves as cofactor.

It catalyses the reaction hydrogenobyrinate + 2 L-glutamine + 2 ATP + 2 H2O = hydrogenobyrinate a,c-diamide + 2 L-glutamate + 2 ADP + 2 phosphate + 2 H(+). It participates in cofactor biosynthesis; adenosylcobalamin biosynthesis; cob(II)yrinate a,c-diamide from precorrin-2 (aerobic route): step 9/10. Its function is as follows. Catalyzes the ATP-dependent amidation of the two carboxylate groups at positions a and c of hydrogenobyrinate, using either L-glutamine or ammonia as the nitrogen source. This is Hydrogenobyrinate a,c-diamide synthase from Rhizobium meliloti (strain 1021) (Ensifer meliloti).